The following is an 84-amino-acid chain: ATP synthase subunit c (84 aa).

2 helical membrane passes run 9-29 (IIGA…GFAI) and 54-74 (IVAG…LLFI).

The protein belongs to the ATPase C chain family. As to quaternary structure, F-type ATPases have 2 components, F(1) - the catalytic core - and F(0) - the membrane proton channel. F(1) has five subunits: alpha(3), beta(3), gamma(1), delta(1), epsilon(1). F(0) has three main subunits: a(1), b(2) and c(10-14). The alpha and beta chains form an alternating ring which encloses part of the gamma chain. F(1) is attached to F(0) by a central stalk formed by the gamma and epsilon chains, while a peripheral stalk is formed by the delta and b chains.

Its subcellular location is the cell inner membrane. F(1)F(0) ATP synthase produces ATP from ADP in the presence of a proton or sodium gradient. F-type ATPases consist of two structural domains, F(1) containing the extramembraneous catalytic core and F(0) containing the membrane proton channel, linked together by a central stalk and a peripheral stalk. During catalysis, ATP synthesis in the catalytic domain of F(1) is coupled via a rotary mechanism of the central stalk subunits to proton translocation. Its function is as follows. Key component of the F(0) channel; it plays a direct role in translocation across the membrane. A homomeric c-ring of between 10-14 subunits forms the central stalk rotor element with the F(1) delta and epsilon subunits. The chain is ATP synthase subunit c from Haemophilus influenzae (strain ATCC 51907 / DSM 11121 / KW20 / Rd).